Consider the following 543-residue polypeptide: Chaperonin GroEL 4 (543 aa).

ATP contacts are provided by residues 29 to 32 (TLGP), 86 to 90 (DGTTT), G411, 476 to 478 (DAA), and D492.

Belongs to the chaperonin (HSP60) family. In terms of assembly, forms a cylinder of 14 subunits composed of two heptameric rings stacked back-to-back. Interacts with the co-chaperonin GroES.

The protein localises to the cytoplasm. It catalyses the reaction ATP + H2O + a folded polypeptide = ADP + phosphate + an unfolded polypeptide.. In terms of biological role, together with its co-chaperonin GroES, plays an essential role in assisting protein folding. The GroEL-GroES system forms a nano-cage that allows encapsulation of the non-native substrate proteins and provides a physical environment optimized to promote and accelerate protein folding. This chain is Chaperonin GroEL 4, found in Bradyrhizobium diazoefficiens (strain JCM 10833 / BCRC 13528 / IAM 13628 / NBRC 14792 / USDA 110).